Reading from the N-terminus, the 176-residue chain is Large ribosomal subunit protein uL10 (176 aa).

The protein belongs to the universal ribosomal protein uL10 family. As to quaternary structure, part of the ribosomal stalk of the 50S ribosomal subunit. The N-terminus interacts with L11 and the large rRNA to form the base of the stalk. The C-terminus forms an elongated spine to which L12 dimers bind in a sequential fashion forming a multimeric L10(L12)X complex.

Its function is as follows. Forms part of the ribosomal stalk, playing a central role in the interaction of the ribosome with GTP-bound translation factors. This is Large ribosomal subunit protein uL10 from Mycobacteroides abscessus (strain ATCC 19977 / DSM 44196 / CCUG 20993 / CIP 104536 / JCM 13569 / NCTC 13031 / TMC 1543 / L948) (Mycobacterium abscessus).